The following is a 143-amino-acid chain: Ribosome maturation factor RimP (143 aa).

It belongs to the RimP family.

The protein localises to the cytoplasm. Required for maturation of 30S ribosomal subunits. The sequence is that of Ribosome maturation factor RimP from Neisseria meningitidis serogroup C (strain 053442).